The chain runs to 389 residues: Chalcone synthase J (389 aa).

Cys-164 is an active-site residue.

This sequence belongs to the thiolase-like superfamily. Chalcone/stilbene synthases family.

It catalyses the reaction (E)-4-coumaroyl-CoA + 3 malonyl-CoA + 3 H(+) = 2',4,4',6'-tetrahydroxychalcone + 3 CO2 + 4 CoA. Its pathway is secondary metabolite biosynthesis; flavonoid biosynthesis. In terms of biological role, the primary product of this enzyme is 4,2',4',6'-tetrahydroxychalcone (also termed naringenin-chalcone or chalcone) which can under specific conditions spontaneously isomerize into naringenin. The protein is Chalcone synthase J (CHSJ) of Petunia hybrida (Petunia).